Here is a 154-residue protein sequence, read N- to C-terminus: 6,7-dimethyl-8-ribityllumazine synthase (154 aa).

Residues Phe-26, Ala-60–Glu-62, and Cys-84–Ile-86 each bind 5-amino-6-(D-ribitylamino)uracil. Glu-89–Thr-90 contributes to the (2S)-2-hydroxy-3-oxobutyl phosphate binding site. Residue His-92 is the Proton donor of the active site. Asn-117 serves as a coordination point for 5-amino-6-(D-ribitylamino)uracil. Residue Arg-131 coordinates (2S)-2-hydroxy-3-oxobutyl phosphate.

Belongs to the DMRL synthase family.

The catalysed reaction is (2S)-2-hydroxy-3-oxobutyl phosphate + 5-amino-6-(D-ribitylamino)uracil = 6,7-dimethyl-8-(1-D-ribityl)lumazine + phosphate + 2 H2O + H(+). It participates in cofactor biosynthesis; riboflavin biosynthesis; riboflavin from 2-hydroxy-3-oxobutyl phosphate and 5-amino-6-(D-ribitylamino)uracil: step 1/2. Its function is as follows. Catalyzes the formation of 6,7-dimethyl-8-ribityllumazine by condensation of 5-amino-6-(D-ribitylamino)uracil with 3,4-dihydroxy-2-butanone 4-phosphate. This is the penultimate step in the biosynthesis of riboflavin. In Leptothrix cholodnii (strain ATCC 51168 / LMG 8142 / SP-6) (Leptothrix discophora (strain SP-6)), this protein is 6,7-dimethyl-8-ribityllumazine synthase.